The primary structure comprises 476 residues: E3 SUMO-protein ligase EGR2 (476 aa).

Over residues 127–141 (PASTTASSSVTSASP) the composition is skewed to low complexity. The interval 127-178 (PASTTASSSVTSASPNPLATGPLGVCTMSQTQPDLDHLYSPPPPPPPYSGCA) is disordered. The HCFC1-binding-motif (HBM) signature appears at 162–165 (DHLY). N6-acetyllysine; by EP300 is present on Lys247. Disordered stretches follow at residues 275-300 (GPSAGVTGPGASGGSEGPRLPGSSSA) and 318-341 (RPILRPRKYPNRPSKTPVHERPYP). The segment covering 281–290 (TGPGASGGSE) has biased composition (gly residues). 3 consecutive C2H2-type zinc fingers follow at residues 340-364 (YPCPAEGCDRRFSRSDELTRHIRIH), 370-392 (FQCRICMRNFSRSDHLTTHIRTH), and 398-420 (FACDYCGRKFARSDERKRHTKIH). The segment at 412 to 476 (ERKRHTKIHL…APCSSRTRTP (65 aa)) is disordered. Over residues 415-425 (RHTKIHLRQKE) the composition is skewed to basic residues. The span at 429 to 476 (SAPSASVPAPSTASCSGGVQPGGTLCSSNSSSLGGGPLAPCSSRTRTP) shows a compositional bias: low complexity.

Belongs to the EGR C2H2-type zinc-finger protein family. In terms of assembly, interacts with HCFC1. Interacts with WWP2. Interacts with UBC9. Interacts with CITED1. Interacts (via phosphorylated form) with SFN. Post-translationally, ubiquitinated by WWP2 leading to proteasomal degradation. Acetylated at Lys-247. May be deacetylated by HDAC6, HDAC10 or SIRT1.

The protein resides in the nucleus. It participates in protein modification; protein sumoylation. Functionally, sequence-specific DNA-binding transcription factor. Plays a role in hindbrain segmentation by regulating the expression of a subset of homeobox containing genes and in Schwann cell myelination by regulating the expression of genes involved in the formation and maintenance of myelin. Binds to two EGR2-consensus sites EGR2A (5'-CTGTAGGAG-3') and EGR2B (5'-ATGTAGGTG-3') in the HOXB3 enhancer and promotes HOXB3 transcriptional activation. Binds to specific DNA sites located in the promoter region of HOXA4, HOXB2 and ERBB2. Regulates hindbrain segmentation by controlling the expression of Hox genes, such as HOXA4, HOXB3 and HOXB2, and thereby specifying odd and even rhombomeres. Promotes the expression of HOXB3 in the rhombomere r5 in the hindbrain. Regulates myelination in the peripheral nervous system after birth, possibly by regulating the expression of myelin proteins, such as MPZ, and by promoting the differentiation of Schwann cells. Involved in the development of the jaw openener musculature, probably by playing a role in its innervation through trigeminal motor neurons. May play a role in adipogenesis, possibly by regulating the expression of CEBPB. E3 SUMO-protein ligase helping SUMO1 conjugation to its coregulators NAB1 and NAB2, whose sumoylation down-regulates EGR2 transcriptional activity. This is E3 SUMO-protein ligase EGR2 (EGR2) from Homo sapiens (Human).